Consider the following 906-residue polypeptide: Inactive angiotensin-converting enzyme-related protein (906 aa).

Positions 1-19 (MKFHILLLLLVGACLPVFT) are cleaved as a signal peptide. The interval 28-95 (LLPADEAPKD…SPTPEPEPAI (68 aa)) is disordered. The span at 67–83 (PEPKPEPEPEPEPKPEP) shows a compositional bias: basic and acidic residues. An N-linked (GlcNAc...) asparagine glycan is attached at Asn-159. A Peptidase M2 domain is found at 175–765 (IKDEEKLRSW…EIDQVVVGWD (591 aa)). Residues Cys-289 and Cys-297 are joined by a disulfide bond. N-linked (GlcNAc...) asparagine glycosylation occurs at Asn-653. The tract at residues 862 to 882 (VTTPEPSAEPEPTAKTTTKMP) is disordered. Residues 863–882 (TTPEPSAEPEPTAKTTTKMP) are compositionally biased toward low complexity.

Belongs to the peptidase M2 family. As to expression, expressed in the hypodermis, in the vulva during organogenesis, and in the ray papillae of the male tail.

In terms of biological role, inactive as a metallopeptidase, due to a lack of active site residues. Required for larval molting, male tail development, and formation of adult alae. Acts in the heterochronic pathway and plays a role in the developmental timing of postembryonic hypodermal seam cell division and adult alae production. Acts synergistically with apl-1 in let-7 regulated postembryonic cell division events. Might act downstream of the heterochronic protein lin-41. Negative regulator of lifespan, heat and oxidative stress response and age-related degenerative changes like reduced pharyngeal pumping and decreased body movements. Lifespan restriction is dependent on the forkhead-type transcription factor daf-16. The chain is Inactive angiotensin-converting enzyme-related protein from Caenorhabditis elegans.